Consider the following 146-residue polypeptide: Sordarin/hypoxysordarin biosynthesis cluster protein G (146 aa).

It participates in antibiotic biosynthesis. Functionally, part of the gene cluster that mediates the biosynthesis of sordarin and hypoxysordarin, glycoside antibiotics with a unique tetracyclic diterpene aglycone structure. First, the geranylgeranyl diphosphate synthase sdnC constructs GGDP from farnesyl diphosphate and isopentenyl diphosphate. The diterpene cyclase sdnA then catalyzes the cyclization of GGDP to afford cycloaraneosene. Cycloaraneosene is then hydroxylated four times by the putative cytochrome P450 monooxygenases sdnB, sdnE, sdnF and sdnH to give a hydroxylated cycloaraneosene derivative such as cycloaraneosene-8,9,13,19-tetraol. Although the order of the hydroxylations is unclear, at least C8, C9 and C13 of the cycloaraneosene skeleton are hydroxylated before the sordaricin formation. Dehydration of the 13-hydroxy group of the hydroxylated cycloaraneosene derivative might be catalyzed by an unassigned hypothetical protein such as sdnG and sdnP to construct the cyclopentadiene moiety. The FAD-dependent oxidoreductase sdnN is proposed to catalyze the oxidation at C9 of the hydroxylated cycloaraneosene derivative and also catalyze the Baeyer-Villiger oxidation to give the lactone intermediate. The presumed lactone intermediate would be hydrolyzed to give an acrolein moiety and a carboxylate moiety. Then, [4+2]cycloaddition would occur between the acrolein moiety and the cyclopentadiene moiety to give sordaricin. SdnN might also be involved in the [4+2]cycloaddition after the hypothesized oxidation to accommodate the oxidized product and prompt the [4+2]cycloaddition. GDP-6-deoxy-D-altrose may be biosynthesized from GDP-D-mannose by the putative GDP-mannose-4,6-dehydratase sdnI and the short-chain dehydrogenase sdnK. The glycosyltransferase sdnJ catalyzes the attachment of 6-deoxy-D-altrose onto the 19-hydroxy group of sordaricin to give 4'-O-demethylsordarin. The methyltransferase sdnD would complete the biosynthesis of sordarin. Sordarin can be further modified into hypoxysordarin. The unique acyl chain at the 3'-hydroxy group of hypoxysordarin would be constructed by an iterative type I PKS sdnO and the trans-acting polyketide methyltransferase sdnL. SdnL would be responsible for the introduction of an alpha-methyl group of the polyketide chain. Alternatively, the beta-lactamase-like protein sdnR might be responsible for the cleavage and transfer of the polyketide chain from the PKS sdnO to sordarin. Two putative cytochrome P450 monooxygenases, sdnQ and sdnT, might catalyze the epoxidations of the polyketide chain to complete the biosynthesis of hypoxysordarin. Transcriptional regulators sdnM and sdnS are presumably encoded for the transcriptional regulation of the expression of the sdn gene cluster. This chain is Sordarin/hypoxysordarin biosynthesis cluster protein G, found in Sordaria araneosa (Pleurage araneosa).